Consider the following 384-residue polypeptide: Oxoeicosanoid receptor 1 (384 aa).

The disordered stretch occupies residues 1–21 (MELHNLSSPSPSLSSSVLPPS). Over 1 to 58 (MELHNLSSPSPSLSSSVLPPSFSPSPSSAPSAFTTVGGSSGGPCHPTSSSLVSAFLAP) the chain is Extracellular. Residue asparagine 5 is glycosylated (N-linked (GlcNAc...) asparagine). Over residues 7–21 (SSPSPSLSSSVLPPS) the composition is skewed to low complexity. Residues 59 to 79 (ILALEFVLGLVGNSLALFIFC) form a helical membrane-spanning segment. The Cytoplasmic portion of the chain corresponds to 80 to 87 (IHTRPWTS). A helical membrane pass occupies residues 88 to 108 (NTVFLVSLVAADFLLISNLPL). The Extracellular segment spans residues 109–129 (RVDYYLLHETWRFGAAACKVN). An intrachain disulfide couples cysteine 126 to cysteine 198. A helical transmembrane segment spans residues 130–152 (LFMLSTNRTASVVFLTAIALNRY). The Cytoplasmic portion of the chain corresponds to 153–172 (LKVVQPHHVLSRASVGAAAR). Residues 173–193 (VAGGLWVGILLLNGHLLLSTF) traverse the membrane as a helical segment. Over 194-215 (SGPSCLSYRVGTKPSASLRWHQ) the chain is Extracellular. A helical membrane pass occupies residues 216–236 (ALYLLEFFLPLALILFAIVSI). At 237-256 (GLTIRNRGLGGQAGPQRAMR) the chain is on the cytoplasmic side. Residues 257-277 (VLAMVVAVYTICFLPSIIFGM) traverse the membrane as a helical segment. The Extracellular segment spans residues 278-297 (ASMVAFWLSACRSLDLCTQL). The helical transmembrane segment at 298–318 (FHGSLAFTYLNSVLDPVLYCF) threads the bilayer. At 319–384 (SSPNFLHQSR…SLEKEGSSQG (66 aa)) the chain is on the cytoplasmic side.

It belongs to the G-protein coupled receptor 1 family. In terms of tissue distribution, expressed in various tissues except brain. Expression is more intense in liver, kidney, peripheral leukocyte, lung, and spleen than in other tissues. Highly expressed in eosinophils, neutrophils, and lung macrophages.

It is found in the membrane. Its function is as follows. Receptor for eicosanoids and polyunsaturated fatty acids such as 5-oxo-6E,8Z,11Z,14Z-eicosatetraenoic acid (5-OXO-ETE), 5(S)-hydroperoxy-6E,8Z,11Z,14Z-eicosatetraenoic acid (5(S)-HPETE) and arachidonic acid. Seems to be coupled to the G(i)/G(o), families of heteromeric G proteins. This chain is Oxoeicosanoid receptor 1 (OXER1), found in Homo sapiens (Human).